Reading from the N-terminus, the 369-residue chain is Glutamate 5-kinase (369 aa).

Residue K8 coordinates ATP. Substrate contacts are provided by S49, D136, and N148. ATP is bound by residues 168 to 169 (TD) and 211 to 217 (TGGMATK). The PUA domain maps to 276–354 (KGELWLDEGA…TELANILGYA (79 aa)).

This sequence belongs to the glutamate 5-kinase family.

The protein localises to the cytoplasm. It catalyses the reaction L-glutamate + ATP = L-glutamyl 5-phosphate + ADP. It functions in the pathway amino-acid biosynthesis; L-proline biosynthesis; L-glutamate 5-semialdehyde from L-glutamate: step 1/2. Functionally, catalyzes the transfer of a phosphate group to glutamate to form L-glutamate 5-phosphate. In Thermosynechococcus vestitus (strain NIES-2133 / IAM M-273 / BP-1), this protein is Glutamate 5-kinase.